Consider the following 566-residue polypeptide: Intracellular exo-alpha-(1-&gt;5)-L-arabinofuranosidase (566 aa).

The span at 1 to 12 shows a compositional bias: polar residues; sequence MTTHNSQYSAET. Residues 1–39 form a disordered region; it reads MTTHNSQYSAETTHPDKQESSPAPTAAGTTASNVSTTGN. A compositionally biased stretch (low complexity) spans 20 to 32; sequence SSPAPTAAGTTAS. Residues Glu69, Asn114, and Asn214 each coordinate alpha-L-arabinofuranose. The active-site Proton donor/acceptor is Glu215. Alpha-L-arabinofuranose contacts are provided by Tyr286, Glu340, and Gln409. Glu340 (nucleophile) is an active-site residue.

The protein belongs to the glycosyl hydrolase 51 family. Homohexamer; trimer of dimers.

It localises to the cytoplasm. It carries out the reaction Hydrolysis of terminal non-reducing alpha-L-arabinofuranoside residues in alpha-L-arabinosides.. Its pathway is glycan metabolism; L-arabinan degradation. Its activity is regulated as follows. Completely inhibited by Hg(2+) and Cu(2+) ions, whereas 1 mM Zn(2+) inhibited activity by 51%. Functionally, involved in the degradation of arabinan and is a key enzyme in the complete degradation of the plant cell wall. Catalyzes the cleavage of terminal alpha-(1-&gt;5)-arabinofuranosyl bonds in different hemicellulosic homopolysaccharides (branched and debranched arabinans). It is active with sugar beet arabinan and wheat arabinoxylan. It also exhibited activity against alpha-(1-&gt;5)-linked arabinobiose, arabinotriose, arabinotetraose, and arabinopentaose. The sequence is that of Intracellular exo-alpha-(1-&gt;5)-L-arabinofuranosidase (abfB) from Bifidobacterium longum.